A 243-amino-acid chain; its full sequence is R-spondin-2 (243 aa).

A signal peptide spans 1-21; that stretch reads MQFQLFSFVLIILNCVDYSHC. 11 disulfide bridges follow: cysteine 40–cysteine 46, cysteine 43–cysteine 52, cysteine 55–cysteine 74, cysteine 78–cysteine 93, cysteine 96–cysteine 104, cysteine 101–cysteine 110, cysteine 113–cysteine 124, cysteine 128–cysteine 141, cysteine 145–cysteine 187, cysteine 156–cysteine 163, and cysteine 196–cysteine 203. One copy of the FU repeat lies at 90–134; the sequence is MNRCSRCRIENCDSCFSRDFCIKCKSGFYSHKGQCFEECPEGFAP. In terms of domain architecture, TSP type-1 spans 144–204; that stretch reads GCEVGPWSEW…RCKMAMRHCP (61 aa). Residue asparagine 160 is glycosylated (N-linked (GlcNAc...) asparagine). The segment at 202 to 243 is disordered; that stretch reads HCPGGTRTTKKKDKKNKKKKKKLLERAQEQHSVVLATDRSSQ. The segment covering 209-224 has biased composition (basic residues); sequence TTKKKDKKNKKKKKKL.

It belongs to the R-spondin family. Binds heparin.

Its subcellular location is the secreted. In terms of biological role, activator of the canonical Wnt signaling pathway by acting as a ligand for lgr4-6 receptors. Upon binding to lgr4-6 (lgr4, lgr5 or lgr6), lgr4-6 associate with phosphorylated lrp6 and frizzled receptors that are activated by extracellular Wnt receptors, triggering the canonical Wnt signaling pathway to increase expression of target genes. Acts both in the canonical. Wnt/beta-catenin-dependent pathway and in non-canonical Wnt signaling pathway. Activates neural markers and promotes muscle formation. Overexpression blocks activin, nodal and BMP4 signaling, suggesting that it may negatively regulate the TGF-beta pathway. During embryonic development, plays a crucial role in limb specification, amplifying the Wnt signaling pathway independently of LGR4-6 receptors, possibly by acting as a direct antagonistic ligand to RNF43 and ZNRF3, hence governing the number of limbs an embryo should form. This Xenopus tropicalis (Western clawed frog) protein is R-spondin-2 (rspo2).